Reading from the N-terminus, the 657-residue chain is UvrABC system protein B (657 aa).

In terms of domain architecture, Helicase ATP-binding spans 23-414 (KSIKKGNKYQ…KENIFHQIMR (392 aa)). 36–43 (GVTGSGKT) is a binding site for ATP. Positions 89 to 112 (YYDYYQPEAYIPRTDVFIEKDSST) match the Beta-hairpin motif. Residues 431–593 (QVEILFDEAK…ITPTSVKRHI (163 aa)) form the Helicase C-terminal domain. Residues 622 to 657 (AKLAKELRKQMLEAAKALEFEKAAAIRDEINKLRDL) form the UVR domain.

This sequence belongs to the UvrB family. In terms of assembly, forms a heterotetramer with UvrA during the search for lesions. Interacts with UvrC in an incision complex.

It localises to the cytoplasm. Its function is as follows. The UvrABC repair system catalyzes the recognition and processing of DNA lesions. A damage recognition complex composed of 2 UvrA and 2 UvrB subunits scans DNA for abnormalities. Upon binding of the UvrA(2)B(2) complex to a putative damaged site, the DNA wraps around one UvrB monomer. DNA wrap is dependent on ATP binding by UvrB and probably causes local melting of the DNA helix, facilitating insertion of UvrB beta-hairpin between the DNA strands. Then UvrB probes one DNA strand for the presence of a lesion. If a lesion is found the UvrA subunits dissociate and the UvrB-DNA preincision complex is formed. This complex is subsequently bound by UvrC and the second UvrB is released. If no lesion is found, the DNA wraps around the other UvrB subunit that will check the other stand for damage. The chain is UvrABC system protein B from Campylobacter jejuni (strain RM1221).